We begin with the raw amino-acid sequence, 368 residues long: MTTLNSTPRADGFHMPAEWAPQTQVWMVWPERPDNWRLGGKPAQAAHVAIAKAIARFEPVTVAVSAAQYDNARARLDMPNIRVVEMSSNDAWVRDSGPTFVINDRGEVRGVNWEFNAWGGFDGGLYAPWNLDSQLGGKVLEIERCPRYVTEGFVLEGGSIHVDGEGTLITTEECLLNRNRNPHLTREQIETILGDYLAVDKVIWLPEGLFNDETDGHVDNFCCYIRPGEVLLAWTDDPEDPNYSRCHAALSILENTLDAKGRAFIVHKMPIPGPLFATEEECAGVDQVHGSQERNPSVRLAGSYVNFLIVNGGIIAPSFDDPMDEKAREILQKLFPEHEVVMAPGRELLLGGGNIHCLTQQQPAPHKN.

Residue cysteine 357 is the Amidino-cysteine intermediate of the active site.

This sequence belongs to the agmatine deiminase family. Homodimer.

It catalyses the reaction agmatine + H2O = N-carbamoylputrescine + NH4(+). It functions in the pathway amine and polyamine biosynthesis; putrescine biosynthesis via agmatine pathway; N-carbamoylputrescine from agmatine: step 1/1. In terms of biological role, mediates the hydrolysis of agmatine into N-carbamoylputrescine in the arginine decarboxylase (ADC) pathway of putrescine biosynthesis, a basic polyamine. The sequence is that of Agmatine deiminase from Pseudomonas syringae pv. syringae (strain B728a).